A 100-amino-acid chain; its full sequence is Large ribosomal subunit protein uL23 (100 aa).

The protein belongs to the universal ribosomal protein uL23 family. As to quaternary structure, part of the 50S ribosomal subunit. Contacts protein L29, and trigger factor when it is bound to the ribosome.

One of the early assembly proteins it binds 23S rRNA. One of the proteins that surrounds the polypeptide exit tunnel on the outside of the ribosome. Forms the main docking site for trigger factor binding to the ribosome. This Novosphingobium aromaticivorans (strain ATCC 700278 / DSM 12444 / CCUG 56034 / CIP 105152 / NBRC 16084 / F199) protein is Large ribosomal subunit protein uL23.